Consider the following 407-residue polypeptide: FK506-binding protein 3 (407 aa).

Disordered stretches follow at residues 46 to 136, 191 to 223, and 236 to 297; these read RIEG…DDEG, DEDELLALGEDDEDDEDELDEGEYDLSPDEDEV, and QDDE…PKLV. 2 stretches are compositionally biased toward acidic residues: residues 65–88 and 103–136; these read NFDDEDDEDDEDEDDDDEDDEVSA and DGLDEVEGGDDDEDDDEDDEMEFEEDDEDDDDEG. Over residues 236–252 the composition is skewed to acidic residues; the sequence is QDDEDDEDDEDEEEEPV. Over residues 253–272 the composition is skewed to basic and acidic residues; sequence VEPKKILKRAAEEKKQEKAA. In terms of domain architecture, PPIase FKBP-type spans 321-407; the sequence is GSKVGVRYVG…TFDVKVVNIK (87 aa).

The protein belongs to the FKBP-type PPIase family. FKBP3/4 subfamily.

It is found in the nucleus. Its subcellular location is the nucleolus. The enzyme catalyses [protein]-peptidylproline (omega=180) = [protein]-peptidylproline (omega=0). With respect to regulation, inhibited by both FK506 and rapamycin. In terms of biological role, PPIases accelerate the folding of proteins. It catalyzes the cis-trans isomerization of proline imidic peptide bonds in oligopeptides. This is FK506-binding protein 3 (FPR3) from Yarrowia lipolytica (strain CLIB 122 / E 150) (Yeast).